Here is a 432-residue protein sequence, read N- to C-terminus: 23S rRNA (uracil(1939)-C(5))-methyltransferase RlmD (432 aa).

In terms of domain architecture, TRAM spans 1-53; sequence MPIGKIESLDHEARGITRQEGKAIFVDGALPGETVEYASFRRKSKFELAHLVH. [4Fe-4S] cluster contacts are provided by cysteine 66, cysteine 72, cysteine 75, and cysteine 154. S-adenosyl-L-methionine-binding residues include glutamine 263, phenylalanine 292, asparagine 297, glutamate 313, asparagine 341, and aspartate 362. Catalysis depends on cysteine 388, which acts as the Nucleophile.

Belongs to the class I-like SAM-binding methyltransferase superfamily. RNA M5U methyltransferase family. RlmD subfamily.

It carries out the reaction uridine(1939) in 23S rRNA + S-adenosyl-L-methionine = 5-methyluridine(1939) in 23S rRNA + S-adenosyl-L-homocysteine + H(+). Functionally, catalyzes the formation of 5-methyl-uridine at position 1939 (m5U1939) in 23S rRNA. This chain is 23S rRNA (uracil(1939)-C(5))-methyltransferase RlmD, found in Dechloromonas aromatica (strain RCB).